A 344-amino-acid polypeptide reads, in one-letter code: Centromere protein N (344 aa).

It belongs to the CENP-N/CHL4 family.

The protein localises to the nucleus. Its subcellular location is the chromosome. The protein resides in the centromere. Probable component of a centromeric complex involved in assembly of kinetochore proteins, mitotic progression and chromosome segregation. The polypeptide is Centromere protein N (CENPN) (Gallus gallus (Chicken)).